Reading from the N-terminus, the 202-residue chain is Orotate phosphoribosyltransferase (202 aa).

5-phospho-alpha-D-ribose 1-diphosphate contacts are provided by residues Lys93 and 113 to 121 (EDIITTGGS). Positions 117 and 145 each coordinate orotate.

This sequence belongs to the purine/pyrimidine phosphoribosyltransferase family. PyrE subfamily. Homodimer. Requires Mg(2+) as cofactor.

It catalyses the reaction orotidine 5'-phosphate + diphosphate = orotate + 5-phospho-alpha-D-ribose 1-diphosphate. It functions in the pathway pyrimidine metabolism; UMP biosynthesis via de novo pathway; UMP from orotate: step 1/2. In terms of biological role, catalyzes the transfer of a ribosyl phosphate group from 5-phosphoribose 1-diphosphate to orotate, leading to the formation of orotidine monophosphate (OMP). The sequence is that of Orotate phosphoribosyltransferase from Campylobacter fetus subsp. fetus (strain 82-40).